The chain runs to 215 residues: 3-isopropylmalate dehydratase small subunit (215 aa).

Belongs to the LeuD family. LeuD type 1 subfamily. As to quaternary structure, heterodimer of LeuC and LeuD.

The catalysed reaction is (2R,3S)-3-isopropylmalate = (2S)-2-isopropylmalate. It functions in the pathway amino-acid biosynthesis; L-leucine biosynthesis; L-leucine from 3-methyl-2-oxobutanoate: step 2/4. Functionally, catalyzes the isomerization between 2-isopropylmalate and 3-isopropylmalate, via the formation of 2-isopropylmaleate. The sequence is that of 3-isopropylmalate dehydratase small subunit from Ectopseudomonas mendocina (strain ymp) (Pseudomonas mendocina).